We begin with the raw amino-acid sequence, 643 residues long: uncharacterized protein (643 aa).

Residues Ile9 to Lys29 form a helical membrane-spanning segment.

The protein localises to the membrane. This is an uncharacterized protein from Methanocaldococcus jannaschii (strain ATCC 43067 / DSM 2661 / JAL-1 / JCM 10045 / NBRC 100440) (Methanococcus jannaschii).